We begin with the raw amino-acid sequence, 875 residues long: Phosphoenolpyruvate carboxylase (875 aa).

Catalysis depends on residues histidine 137 and lysine 542.

The protein belongs to the PEPCase type 1 family. It depends on Mg(2+) as a cofactor.

The catalysed reaction is oxaloacetate + phosphate = phosphoenolpyruvate + hydrogencarbonate. In terms of biological role, forms oxaloacetate, a four-carbon dicarboxylic acid source for the tricarboxylic acid cycle. This chain is Phosphoenolpyruvate carboxylase, found in Pseudomonas putida (strain ATCC 700007 / DSM 6899 / JCM 31910 / BCRC 17059 / LMG 24140 / F1).